Here is a 63-residue protein sequence, read N- to C-terminus: Large ribosomal subunit protein uL29 (63 aa).

The protein belongs to the universal ribosomal protein uL29 family.

This Idiomarina loihiensis (strain ATCC BAA-735 / DSM 15497 / L2-TR) protein is Large ribosomal subunit protein uL29.